Consider the following 342-residue polypeptide: BAG family molecular chaperone regulator 1 (342 aa).

The interval 1-41 is disordered; the sequence is MMKMMRNKPTNLPTAGMTNGGRGSGGGGGGGGRESGGRDLE. The segment covering 8-17 has biased composition (polar residues); sequence KPTNLPTAGM. The segment covering 18–34 has biased composition (gly residues); sequence TNGGRGSGGGGGGGGRE. A Ubiquitin-like domain is found at 65–141; the sequence is PMIRVRIKYG…MVLIEDPLSQ (77 aa). One can recognise a BAG domain in the interval 160–238; sequence AISDISLEVD…NYVETLDALK (79 aa). At Ser298 the chain carries Phosphoserine.

As to quaternary structure, binds to the ATPase domain of HSP70/HSC70 chaperones.

In terms of biological role, co-chaperone that regulates diverse cellular pathways, such as programmed cell death and stress responses. The chain is BAG family molecular chaperone regulator 1 (BAG1) from Arabidopsis thaliana (Mouse-ear cress).